Reading from the N-terminus, the 343-residue chain is Biotin synthase (343 aa).

The region spanning 36–254 (NTIQISTLLS…IAVARIMMPK (219 aa)) is the Radical SAM core domain. Residues Cys-51, Cys-55, and Cys-58 each coordinate [4Fe-4S] cluster. [2Fe-2S] cluster contacts are provided by Cys-95, Cys-126, Cys-186, and Arg-258.

This sequence belongs to the radical SAM superfamily. Biotin synthase family. As to quaternary structure, homodimer. It depends on [4Fe-4S] cluster as a cofactor. [2Fe-2S] cluster serves as cofactor.

It carries out the reaction (4R,5S)-dethiobiotin + (sulfur carrier)-SH + 2 reduced [2Fe-2S]-[ferredoxin] + 2 S-adenosyl-L-methionine = (sulfur carrier)-H + biotin + 2 5'-deoxyadenosine + 2 L-methionine + 2 oxidized [2Fe-2S]-[ferredoxin]. It participates in cofactor biosynthesis; biotin biosynthesis; biotin from 7,8-diaminononanoate: step 2/2. Functionally, catalyzes the conversion of dethiobiotin (DTB) to biotin by the insertion of a sulfur atom into dethiobiotin via a radical-based mechanism. This chain is Biotin synthase, found in Buchnera aphidicola subsp. Acyrthosiphon pisum (strain APS) (Acyrthosiphon pisum symbiotic bacterium).